The primary structure comprises 469 residues: 3-isopropylmalate dehydratase large subunit (469 aa).

Residues Cys350, Cys410, and Cys413 each contribute to the [4Fe-4S] cluster site.

Belongs to the aconitase/IPM isomerase family. LeuC type 1 subfamily. In terms of assembly, heterodimer of LeuC and LeuD. [4Fe-4S] cluster is required as a cofactor.

The enzyme catalyses (2R,3S)-3-isopropylmalate = (2S)-2-isopropylmalate. The protein operates within amino-acid biosynthesis; L-leucine biosynthesis; L-leucine from 3-methyl-2-oxobutanoate: step 2/4. Functionally, catalyzes the isomerization between 2-isopropylmalate and 3-isopropylmalate, via the formation of 2-isopropylmaleate. The chain is 3-isopropylmalate dehydratase large subunit from Allorhizobium ampelinum (strain ATCC BAA-846 / DSM 112012 / S4) (Agrobacterium vitis (strain S4)).